A 206-amino-acid polypeptide reads, in one-letter code: Large ribosomal subunit protein uL4 (206 aa).

The protein belongs to the universal ribosomal protein uL4 family. Part of the 50S ribosomal subunit.

Functionally, one of the primary rRNA binding proteins, this protein initially binds near the 5'-end of the 23S rRNA. It is important during the early stages of 50S assembly. It makes multiple contacts with different domains of the 23S rRNA in the assembled 50S subunit and ribosome. Its function is as follows. Forms part of the polypeptide exit tunnel. This Xanthobacter autotrophicus (strain ATCC BAA-1158 / Py2) protein is Large ribosomal subunit protein uL4.